Here is a 492-residue protein sequence, read N- to C-terminus: UDP-N-acetylmuramoyl-L-alanyl-D-glutamate--2,6-diaminopimelate ligase (492 aa).

S21 is a binding site for UDP-N-acetyl-alpha-D-muramoyl-L-alanyl-D-glutamate. 98-104 (GTNGKSS) serves as a coordination point for ATP. UDP-N-acetyl-alpha-D-muramoyl-L-alanyl-D-glutamate is bound by residues 144-145 (TT), S171, Q177, and R179. K211 is modified (N6-carboxylysine). Meso-2,6-diaminopimelate contacts are provided by residues R372, 396 to 399 (DNPR), G446, and E450. The short motif at 396–399 (DNPR) is the Meso-diaminopimelate recognition motif element.

The protein belongs to the MurCDEF family. MurE subfamily. It depends on Mg(2+) as a cofactor. In terms of processing, carboxylation is probably crucial for Mg(2+) binding and, consequently, for the gamma-phosphate positioning of ATP.

It is found in the cytoplasm. The enzyme catalyses UDP-N-acetyl-alpha-D-muramoyl-L-alanyl-D-glutamate + meso-2,6-diaminopimelate + ATP = UDP-N-acetyl-alpha-D-muramoyl-L-alanyl-gamma-D-glutamyl-meso-2,6-diaminopimelate + ADP + phosphate + H(+). It participates in cell wall biogenesis; peptidoglycan biosynthesis. In terms of biological role, catalyzes the addition of meso-diaminopimelic acid to the nucleotide precursor UDP-N-acetylmuramoyl-L-alanyl-D-glutamate (UMAG) in the biosynthesis of bacterial cell-wall peptidoglycan. In Rickettsia typhi (strain ATCC VR-144 / Wilmington), this protein is UDP-N-acetylmuramoyl-L-alanyl-D-glutamate--2,6-diaminopimelate ligase.